The following is a 133-amino-acid chain: Ribonuclease P protein component (133 aa).

This sequence belongs to the RnpA family. Consists of a catalytic RNA component (M1 or rnpB) and a protein subunit.

It catalyses the reaction Endonucleolytic cleavage of RNA, removing 5'-extranucleotides from tRNA precursor.. Functionally, RNaseP catalyzes the removal of the 5'-leader sequence from pre-tRNA to produce the mature 5'-terminus. It can also cleave other RNA substrates such as 4.5S RNA. The protein component plays an auxiliary but essential role in vivo by binding to the 5'-leader sequence and broadening the substrate specificity of the ribozyme. This is Ribonuclease P protein component from Corynebacterium glutamicum (strain ATCC 13032 / DSM 20300 / JCM 1318 / BCRC 11384 / CCUG 27702 / LMG 3730 / NBRC 12168 / NCIMB 10025 / NRRL B-2784 / 534).